The primary structure comprises 117 residues: Large ribosomal subunit protein uL18 (117 aa).

This sequence belongs to the universal ribosomal protein uL18 family. Part of the 50S ribosomal subunit; part of the 5S rRNA/L5/L18/L25 subcomplex. Contacts the 5S and 23S rRNAs.

Functionally, this is one of the proteins that bind and probably mediate the attachment of the 5S RNA into the large ribosomal subunit, where it forms part of the central protuberance. The sequence is that of Large ribosomal subunit protein uL18 from Polynucleobacter necessarius subsp. necessarius (strain STIR1).